The chain runs to 183 residues: ATP synthase subunit delta (183 aa).

It belongs to the ATPase delta chain family. F-type ATPases have 2 components, F(1) - the catalytic core - and F(0) - the membrane proton channel. F(1) has five subunits: alpha(3), beta(3), gamma(1), delta(1), epsilon(1). F(0) has three main subunits: a(1), b(2) and c(10-14). The alpha and beta chains form an alternating ring which encloses part of the gamma chain. F(1) is attached to F(0) by a central stalk formed by the gamma and epsilon chains, while a peripheral stalk is formed by the delta and b chains.

It localises to the cell inner membrane. In terms of biological role, f(1)F(0) ATP synthase produces ATP from ADP in the presence of a proton or sodium gradient. F-type ATPases consist of two structural domains, F(1) containing the extramembraneous catalytic core and F(0) containing the membrane proton channel, linked together by a central stalk and a peripheral stalk. During catalysis, ATP synthesis in the catalytic domain of F(1) is coupled via a rotary mechanism of the central stalk subunits to proton translocation. This protein is part of the stalk that links CF(0) to CF(1). It either transmits conformational changes from CF(0) to CF(1) or is implicated in proton conduction. The sequence is that of ATP synthase subunit delta from Rickettsia typhi (strain ATCC VR-144 / Wilmington).